Here is a 121-residue protein sequence, read N- to C-terminus: Large ribosomal subunit protein bL12 (121 aa).

The protein belongs to the bacterial ribosomal protein bL12 family. As to quaternary structure, homodimer. Part of the ribosomal stalk of the 50S ribosomal subunit. Forms a multimeric L10(L12)X complex, where L10 forms an elongated spine to which 2 to 4 L12 dimers bind in a sequential fashion. Binds GTP-bound translation factors.

Its function is as follows. Forms part of the ribosomal stalk which helps the ribosome interact with GTP-bound translation factors. Is thus essential for accurate translation. This Ureaplasma parvum serovar 3 (strain ATCC 27815 / 27 / NCTC 11736) protein is Large ribosomal subunit protein bL12.